A 596-amino-acid polypeptide reads, in one-letter code: Serine/threonine-protein kinase PknH (596 aa).

Over 1–373 the chain is Cytoplasmic; it reads MSDAQDSRVG…QTPRKTNPWP (373 aa). Residues 16–276 form the Protein kinase domain; it reads YHLKRLLGRG…DLALAAHEAL (261 aa). Residues 22–30 and Lys45 contribute to the ATP site; that span reads LGRGGMGEV. Asp139 functions as the Proton acceptor in the catalytic mechanism. At Thr170 the chain carries Phosphothreonine. The segment at 292–368 is disordered; that stretch reads QESTLPGTAA…PSPWAQTPRK (77 aa). A compositionally biased stretch (pro residues) spans 307-318; the sequence is PTMPTVTPPPIQ. A helical membrane pass occupies residues 374-394; the sequence is LVAGAAAVVLVLVLGAIGIWI. Residues 395 to 596 are Extracellular-facing; the sequence is ANRPKPVQPP…AKIVDKVNKE (202 aa).

This sequence belongs to the protein kinase superfamily. Ser/Thr protein kinase family. In terms of processing, autophosphorylated on threonine and serine residues.

Its subcellular location is the cell membrane. The enzyme catalyses L-seryl-[protein] + ATP = O-phospho-L-seryl-[protein] + ADP + H(+). The catalysed reaction is L-threonyl-[protein] + ATP = O-phospho-L-threonyl-[protein] + ADP + H(+). This chain is Serine/threonine-protein kinase PknH (pknH), found in Mycobacterium bovis (strain ATCC BAA-935 / AF2122/97).